Here is a 116-residue protein sequence, read N- to C-terminus: Diuretic hormone class 2 (116 aa).

A signal peptide spans 1 to 25; that stretch reads MTNRCACFALAFLLFCLLAISSIEA. The propeptide occupies 26–75; that stretch reads APMPSQSNGGYGGAGYNELEEVPDDLLMELMTRFGRTIIRARNDLENSKR. Position 106 is a proline amide (Pro-106). Positions 112–116 are excised as a propeptide; the sequence is SETDV.

The protein resides in the secreted. Regulation of fluid secretion. Stimulates Malpighian tubules fluid secretion by activating the apical membrane V-ATPase via cyclic AMP of principal cells in the main secretory segment. This Drosophila melanogaster (Fruit fly) protein is Diuretic hormone class 2 (Dh31).